A 535-amino-acid polypeptide reads, in one-letter code: Ribonuclease Y (535 aa).

A helical transmembrane segment spans residues 4–24 (IILAMVCALIGLIIGYVAISM). The segment at 107-145 (TDRASSLDRKDENLSNKEKMLDSKEQSLTDKSRHINERE) is disordered. The region spanning 225-285 (TITTVHLPDD…IRREIARMTL (61 aa)) is the KH domain. The 94-residue stretch at 351–444 (VLRHSVEVGK…VAAADALSSA (94 aa)) folds into the HD domain.

Belongs to the RNase Y family.

It localises to the cell membrane. Its function is as follows. Endoribonuclease that initiates mRNA decay. The sequence is that of Ribonuclease Y from Streptococcus agalactiae serotype Ia (strain ATCC 27591 / A909 / CDC SS700).